The chain runs to 149 residues: Large ribosomal subunit protein bL9 (149 aa).

Belongs to the bacterial ribosomal protein bL9 family.

Its function is as follows. Binds to the 23S rRNA. This Xanthomonas axonopodis pv. citri (strain 306) protein is Large ribosomal subunit protein bL9.